The following is a 61-amino-acid chain: Metallothionein-1 (61 aa).

N-acetylmethionine is present on Met-1. The interval 1–29 (MDPNCSCATGVSCTCADSCKCKECKCTSC) is beta. 20 residues coordinate a divalent metal cation: Cys-5, Cys-7, Cys-13, Cys-15, Cys-19, Cys-21, Cys-24, Cys-26, Cys-29, Cys-33, Cys-34, Cys-36, Cys-37, Cys-41, Cys-44, Cys-48, Cys-50, Cys-57, Cys-59, and Cys-60. An alpha region spans residues 30 to 61 (KKSCCSCCPVGCAKCAQGCVCKGASEKCNCCA).

Belongs to the metallothionein superfamily. Type 1 family.

In terms of biological role, metallothioneins have a high content of cysteine residues that bind various heavy metals; these proteins are transcriptionally regulated by both heavy metals and glucocorticoids. The chain is Metallothionein-1 (MT1) from Chlorocebus aethiops (Green monkey).